The chain runs to 171 residues: CASP-like protein 0U2 (171 aa).

The Cytoplasmic portion of the chain corresponds to 1–22 (MPVFGLAALKLNWEALSTPKFR). A helical transmembrane segment spans residues 23 to 42 (VTFAQWVCSLLMWSLMASYS). Residues 43–48 (KHGEFK) are Extracellular-facing. Residues 49-69 (FVVVFGLVMWGLASTYLVYQL) form a helical membrane-spanning segment. The Cytoplasmic segment spans residues 70-77 (LNGPPLAP). Residues 78 to 98 (IVEFWANVAAGSLAFICLVLA) form a helical membrane-spanning segment. Residues 99–121 (SATCNRAVGEPQTKVCSGELKPK) are Extracellular-facing. A helical transmembrane segment spans residues 122-142 (ASAAFAFLLLCAYGGLAYLSW). Topologically, residues 143-171 (RTWRNPPTIASYALHDDPEFAQPLHSSHK) are cytoplasmic.

Belongs to the Casparian strip membrane proteins (CASP) family. Homodimer and heterodimers.

It is found in the cell membrane. This chain is CASP-like protein 0U2, found in Chlorokybus atmophyticus (Soil alga).